The sequence spans 1099 residues: ATP-dependent helicase/deoxyribonuclease subunit B (1099 aa).

Residues Cys-766, Cys-1056, Cys-1059, and Cys-1065 each coordinate [4Fe-4S] cluster.

Belongs to the helicase family. AddB/RexB type 2 subfamily. Heterodimer of AddA and RexB. Mg(2+) is required as a cofactor. Requires [4Fe-4S] cluster as cofactor.

The heterodimer acts as both an ATP-dependent DNA helicase and an ATP-dependent, dual-direction single-stranded exonuclease. Recognizes the chi site generating a DNA molecule suitable for the initiation of homologous recombination. This subunit has 5' -&gt; 3' nuclease activity but not helicase activity. In Lactococcus lactis subsp. lactis (strain IL1403) (Streptococcus lactis), this protein is ATP-dependent helicase/deoxyribonuclease subunit B.